Reading from the N-terminus, the 451-residue chain is Multidrug export protein MepA (451 aa).

The next 12 helical transmembrane spans lie at 26–46 (MIGT…IGFL), 54–74 (AISL…LFGV), 97–117 (SFSI…TLPF), 139–159 (LKVM…EQFA), 170–190 (IGML…IFGF), 194–214 (VVGA…FFII), 245–265 (IPAF…NLFL), 282–302 (LVQF…PLIA), 318–338 (AVIM…FTIG), 355–375 (ATFI…GFLF), 397–417 (AIII…GVIW), and 418–438 (SLLI…YLLR).

Belongs to the multi antimicrobial extrusion (MATE) (TC 2.A.66.1) family. MepA subfamily.

Its subcellular location is the cell membrane. Multidrug resistance efflux protein. Contributes to resistance to the glycylcycline antibiotic tigecycline. The polypeptide is Multidrug export protein MepA (mepA) (Staphylococcus aureus (strain N315)).